We begin with the raw amino-acid sequence, 151 residues long: Transcriptional repressor NrdR (151 aa).

Residues 1 to 21 (MRCPFCGEADTQVKDSRPTED) form a disordered region. Residues 3–34 (CPFCGEADTQVKDSRPTEDGAAIRRRRFCPQC) fold into a zinc finger. Basic and acidic residues predominate over residues 11–21 (TQVKDSRPTED). Residues 49-139 (LVVVKADQRR…VYRDFREAKD (91 aa)) enclose the ATP-cone domain.

The protein belongs to the NrdR family. Zn(2+) serves as cofactor.

In terms of biological role, negatively regulates transcription of bacterial ribonucleotide reductase nrd genes and operons by binding to NrdR-boxes. This chain is Transcriptional repressor NrdR, found in Acidiphilium cryptum (strain JF-5).